The sequence spans 109 residues: SRA stem-loop-interacting RNA-binding protein, mitochondrial (109 aa).

Position 15 is a phosphoserine (Ser15). Residues 19-103 (PVAFVRRIPW…RRPKLPQTSD (85 aa)) enclose the RRM domain. Phosphothreonine is present on Thr101. Phosphoserine is present on Ser102.

The protein localises to the mitochondrion. Its subcellular location is the nucleus. RNA-binding protein that acts as a nuclear receptor corepressor. Probably acts by binding the SRA RNA, and repressing the SRA-mediated nuclear receptor coactivation. Binds the STR7 loop of SRA RNA. Also able to repress glucocorticoid (GR), androgen (AR), thyroid (TR) and VDR-mediated transactivation. In Pongo abelii (Sumatran orangutan), this protein is SRA stem-loop-interacting RNA-binding protein, mitochondrial (SLIRP).